The sequence spans 162 residues: tRNA-specific adenosine deaminase (162 aa).

A CMP/dCMP-type deaminase domain is found at 3–115 (DSDKYFMKCA…KNLQKYICCK (113 aa)). Residue histidine 54 participates in Zn(2+) binding. Glutamate 56 serves as the catalytic Proton donor. Cysteine 84 and cysteine 87 together coordinate Zn(2+).

This sequence belongs to the cytidine and deoxycytidylate deaminase family. As to quaternary structure, homodimer. Requires Zn(2+) as cofactor.

The catalysed reaction is adenosine(34) in tRNA + H2O + H(+) = inosine(34) in tRNA + NH4(+). Functionally, catalyzes the deamination of adenosine to inosine at the wobble position 34 of tRNA(Arg2). The sequence is that of tRNA-specific adenosine deaminase from Buchnera aphidicola subsp. Baizongia pistaciae (strain Bp).